A 308-amino-acid chain; its full sequence is KH domain-containing protein At4g26480 (308 aa).

The segment at 1 to 26 is disordered; that stretch reads MMMMTSLGGGAGGGGGGGGSGGGRFV. Residues 7–24 show a composition bias toward gly residues; the sequence is LGGGAGGGGGGGGSGGGR. A KH domain is found at 165-232; the sequence is DIPVDKYPNY…EHLNEPLHIL (68 aa). The tract at residues 284–308 is disordered; sequence EEGSPMSGSISPYNSLGMKRAKTRG. Residue serine 294 is modified to Phosphoserine.

It is found in the nucleus. The polypeptide is KH domain-containing protein At4g26480 (Arabidopsis thaliana (Mouse-ear cress)).